Here is a 56-residue protein sequence, read N- to C-terminus: Cytochrome b-c1 complex subunit 10 (56 aa).

Topologically, residues 1-12 (MLTRFLGPRYRQ) are mitochondrial matrix. A helical transmembrane segment spans residues 13–35 (LARNWVPTASLWGAVGAVGLVWA). The Mitochondrial intermembrane segment spans residues 36 to 56 (TDWRLILDWVPYINGKFKKDD).

It belongs to the UQCR11/QCR10 family. Component of the ubiquinol-cytochrome c oxidoreductase (cytochrome b-c1 complex, complex III, CIII), a multisubunit enzyme composed of 11 subunits. The complex is composed of 3 respiratory subunits cytochrome b, cytochrome c1 and Rieske protein UQCRFS1, 2 core protein subunits UQCRC1/QCR1 and UQCRC2/QCR2, and 6 low-molecular weight protein subunits UQCRH/QCR6, UQCRB/QCR7, UQCRQ/QCR8, UQCR10/QCR9, UQCR11/QCR10 and subunit 9, the cleavage product of Rieske protein UQCRFS1. The complex exists as an obligatory dimer and forms supercomplexes (SCs) in the inner mitochondrial membrane with NADH-ubiquinone oxidoreductase (complex I, CI) and cytochrome c oxidase (complex IV, CIV), resulting in different assemblies (supercomplex SCI(1)III(2)IV(1) and megacomplex MCI(2)III(2)IV(2)).

Its subcellular location is the mitochondrion inner membrane. Functionally, component of the ubiquinol-cytochrome c oxidoreductase, a multisubunit transmembrane complex that is part of the mitochondrial electron transport chain which drives oxidative phosphorylation. The respiratory chain contains 3 multisubunit complexes succinate dehydrogenase (complex II, CII), ubiquinol-cytochrome c oxidoreductase (cytochrome b-c1 complex, complex III, CIII) and cytochrome c oxidase (complex IV, CIV), that cooperate to transfer electrons derived from NADH and succinate to molecular oxygen, creating an electrochemical gradient over the inner membrane that drives transmembrane transport and the ATP synthase. The cytochrome b-c1 complex catalyzes electron transfer from ubiquinol to cytochrome c, linking this redox reaction to translocation of protons across the mitochondrial inner membrane, with protons being carried across the membrane as hydrogens on the quinol. In the process called Q cycle, 2 protons are consumed from the matrix, 4 protons are released into the intermembrane space and 2 electrons are passed to cytochrome c. QCR10 has a role in CIII assembly and RIP1 stability. This is Cytochrome b-c1 complex subunit 10 (UQCR11) from Bos taurus (Bovine).